A 98-amino-acid chain; its full sequence is Probable sodium channel toxin Ts27 (98 aa).

The signal sequence occupies residues 1 to 22 (MYNMVSLFIVAVLLLTYANVEG). Disulfide bonds link C36–C88, C40–C63, C49–C68, and C53–C70.

Belongs to the long (4 C-C) scorpion toxin superfamily. Sodium channel inhibitor family. Expressed by the venom gland.

The protein resides in the secreted. Its function is as follows. Probable sodium channel toxin. The protein is Probable sodium channel toxin Ts27 of Tityus serrulatus (Brazilian scorpion).